A 238-amino-acid chain; its full sequence is Urease subunit alpha (238 aa).

The interval 1-102 (MKLTPKELDK…LVTVHTPIES (102 aa)) is urease gamma. Residues 103–238 (KGKLVPGELF…DDNYVKTIKE (136 aa)) are urease beta.

This sequence in the N-terminal section; belongs to the urease gamma subunit family. The protein in the C-terminal section; belongs to the urease beta subunit family. As to quaternary structure, heterohexamer of 3 UreA (alpha) and 3 UreB (beta) subunits.

The protein localises to the cytoplasm. It catalyses the reaction urea + 2 H2O + H(+) = hydrogencarbonate + 2 NH4(+). It functions in the pathway nitrogen metabolism; urea degradation; CO(2) and NH(3) from urea (urease route): step 1/1. The sequence is that of Urease subunit alpha from Helicobacter acinonychis (strain Sheeba).